Here is a 588-residue protein sequence, read N- to C-terminus: Cyclomaltodextrinase (588 aa).

Substrate is bound by residues His-247 and Arg-326. The Nucleophile role is filled by Asp-328. Glu-357 acts as the Proton donor in catalysis. Substrate is bound by residues His-423 to Asp-424, Asp-468, and Arg-472.

It belongs to the glycosyl hydrolase 13 family. Exists as a monomer or a homodimer in solution. Homodimer is more active and stable than the monomer.

The enzyme catalyses cyclomaltodextrin + H2O = linear maltodextrin. No metal dependence, but Mn(2+) increases the activity with alpha-cyclodextrin as substrate. No effect on the activity with presence or absence of Ca(2+), Zn(2+), Tween-20 or EDTA. Functionally, hydrolyzes alpha-, beta- and gamma-cyclodextrins with the highest activity with alpha-cyclodextrin (cyclomaltohexaose). Pullulan is the preferred substrate from linear substrates. Maltose is a major product of these reactions. Is also able to hydrolyze maltotriose and acarbose, and transglycosylate their hydrolytic products. Major reaction products of maltotriose and of acarbose are maltose and glucose, and glucose and pseudotrisaccharide, respectively. No activity with glucose or maltose as substrate. The sequence is that of Cyclomaltodextrinase from Geobacillus thermopakistaniensis (strain MAS1).